Consider the following 60-residue polypeptide: Alpha-conotoxin-like 289 (60 aa).

The N-terminal stretch at 1–16 (MFTVFLLVVLATTVVS) is a signal peptide. The propeptide occupies 17-42 (FTSDRAFRGRNAAAKASGLVGLTDKR). Position 43 is a pyrrolidone carboxylic acid (glutamine 43). 2 disulfide bridges follow: cysteine 45-cysteine 51 and cysteine 46-cysteine 59. Residues 47–49 (SYP) are ser-Xaa-Pro motif, crucial for potent interaction with nAChR. The residue at position 59 (cysteine 59) is a Cysteine amide.

It belongs to the conotoxin A superfamily. As to expression, expressed by the venom duct.

The protein localises to the secreted. Its function is as follows. Alpha-conotoxins act on postsynaptic membranes, they bind to the nicotinic acetylcholine receptors (nAChR) and thus inhibit them. This Conus ammiralis (Admiral cone) protein is Alpha-conotoxin-like 289.